The following is a 179-amino-acid chain: MLHRDDHINPPRPRGLDVPCARLRATNPLRALARCVQAGKPGTSSGHRSVPHTADLRIEAWAPTRDGCIRQAVLGTVESFLDLESAHAVHTRLRRLTADRDDDLLVAVLEEVIYLLDTVGETPVDLRLRDVDGGVDVTFATTDASTLVQVGAVPKAVSLNELRFSQGRHGWRCAVTLDV.

Residues D55, D178, and V179 each contribute to the Ca(2+) site.

This sequence belongs to the archease family.

Functionally, activates the tRNA-splicing ligase complex by facilitating the enzymatic turnover of catalytic subunit RtcB. Acts by promoting the guanylylation of RtcB, a key intermediate step in tRNA ligation. Can also alter the NTP specificity of RtcB such that ATP, dGTP or ITP is used efficiently. This is Probable protein archease from Mycobacterium tuberculosis (strain CDC 1551 / Oshkosh).